Reading from the N-terminus, the 62-residue chain is MAKGTPSFGKRNKTKTHVRCRRCGRRAYHVRKGYCAACGFGRSRRIRRYSWQNKKVNRKRRR.

4 residues coordinate Zn(2+): cysteine 20, cysteine 23, cysteine 35, and cysteine 38. The C4-type zinc-finger motif lies at 20-38 (CRRCGRRAYHVRKGYCAAC).

The protein belongs to the eukaryotic ribosomal protein eL37 family. Requires Zn(2+) as cofactor.

Binds to the 23S rRNA. The protein is Large ribosomal subunit protein eL37 of Methanopyrus kandleri (strain AV19 / DSM 6324 / JCM 9639 / NBRC 100938).